Here is an 86-residue protein sequence, read N- to C-terminus: Large ribosomal subunit protein bL27 (86 aa).

Residues methionine 1–threonine 10 are compositionally biased toward gly residues. The interval methionine 1–arginine 20 is disordered.

This sequence belongs to the bacterial ribosomal protein bL27 family.

The sequence is that of Large ribosomal subunit protein bL27 from Bordetella avium (strain 197N).